The sequence spans 87 residues: NAD(P)H-quinone oxidoreductase subunit O (87 aa).

Residues 1 to 10 are compositionally biased toward basic and acidic residues; that stretch reads MSEQTGKVDD. The interval 1–26 is disordered; sequence MSEQTGKVDDSQSPPKVQKKLRKGDL.

This sequence belongs to the complex I NdhO subunit family. In terms of assembly, NDH-1 can be composed of about 15 different subunits; different subcomplexes with different compositions have been identified which probably have different functions.

The protein resides in the cellular thylakoid membrane. It carries out the reaction a plastoquinone + NADH + (n+1) H(+)(in) = a plastoquinol + NAD(+) + n H(+)(out). The enzyme catalyses a plastoquinone + NADPH + (n+1) H(+)(in) = a plastoquinol + NADP(+) + n H(+)(out). In terms of biological role, NDH-1 shuttles electrons from an unknown electron donor, via FMN and iron-sulfur (Fe-S) centers, to quinones in the respiratory and/or the photosynthetic chain. The immediate electron acceptor for the enzyme in this species is believed to be plastoquinone. Couples the redox reaction to proton translocation, and thus conserves the redox energy in a proton gradient. Cyanobacterial NDH-1 also plays a role in inorganic carbon-concentration. This is NAD(P)H-quinone oxidoreductase subunit O from Prochlorococcus marinus (strain NATL1A).